The sequence spans 505 residues: 4-alpha-glucanotransferase (505 aa).

This sequence belongs to the disproportionating enzyme family.

It localises to the cytoplasm. It carries out the reaction Transfers a segment of a (1-&gt;4)-alpha-D-glucan to a new position in an acceptor, which may be glucose or a (1-&gt;4)-alpha-D-glucan.. The sequence is that of 4-alpha-glucanotransferase (malQ) from Synechocystis sp. (strain ATCC 27184 / PCC 6803 / Kazusa).